Reading from the N-terminus, the 320-residue chain is Methionyl-tRNA formyltransferase (320 aa).

114 to 117 (SLLP) is a binding site for (6S)-5,6,7,8-tetrahydrofolate.

It belongs to the Fmt family.

It carries out the reaction L-methionyl-tRNA(fMet) + (6R)-10-formyltetrahydrofolate = N-formyl-L-methionyl-tRNA(fMet) + (6S)-5,6,7,8-tetrahydrofolate + H(+). Attaches a formyl group to the free amino group of methionyl-tRNA(fMet). The formyl group appears to play a dual role in the initiator identity of N-formylmethionyl-tRNA by promoting its recognition by IF2 and preventing the misappropriation of this tRNA by the elongation apparatus. In Acinetobacter baumannii (strain AB0057), this protein is Methionyl-tRNA formyltransferase.